Consider the following 198-residue polypeptide: Probable chemoreceptor glutamine deamidase CheD (198 aa).

The protein belongs to the CheD family.

It catalyses the reaction L-glutaminyl-[protein] + H2O = L-glutamyl-[protein] + NH4(+). Functionally, probably deamidates glutamine residues to glutamate on methyl-accepting chemotaxis receptors (MCPs), playing an important role in chemotaxis. The protein is Probable chemoreceptor glutamine deamidase CheD of Xanthomonas euvesicatoria pv. vesicatoria (strain 85-10) (Xanthomonas campestris pv. vesicatoria).